The chain runs to 428 residues: Serine--tRNA ligase (428 aa).

Position 231-233 (231-233 (TSE)) interacts with L-serine. ATP contacts are provided by residues 262 to 264 (RRE) and Val278. Glu285 is an L-serine binding site. Residue 349 to 352 (ELTS) coordinates ATP. Residue Thr384 participates in L-serine binding.

The protein belongs to the class-II aminoacyl-tRNA synthetase family. Type-1 seryl-tRNA synthetase subfamily. In terms of assembly, homodimer. The tRNA molecule binds across the dimer.

The protein localises to the cytoplasm. The catalysed reaction is tRNA(Ser) + L-serine + ATP = L-seryl-tRNA(Ser) + AMP + diphosphate + H(+). It catalyses the reaction tRNA(Sec) + L-serine + ATP = L-seryl-tRNA(Sec) + AMP + diphosphate + H(+). It functions in the pathway aminoacyl-tRNA biosynthesis; selenocysteinyl-tRNA(Sec) biosynthesis; L-seryl-tRNA(Sec) from L-serine and tRNA(Sec): step 1/1. In terms of biological role, catalyzes the attachment of serine to tRNA(Ser). Is also able to aminoacylate tRNA(Sec) with serine, to form the misacylated tRNA L-seryl-tRNA(Sec), which will be further converted into selenocysteinyl-tRNA(Sec). This Bifidobacterium animalis subsp. lactis (strain AD011) protein is Serine--tRNA ligase.